The chain runs to 293 residues: Probable porphobilinogen deaminase (293 aa).

S-(dipyrrolylmethanemethyl)cysteine is present on cysteine 233.

This sequence belongs to the HMBS family. Dipyrromethane is required as a cofactor.

It catalyses the reaction 4 porphobilinogen + H2O = hydroxymethylbilane + 4 NH4(+). It functions in the pathway porphyrin-containing compound metabolism; protoporphyrin-IX biosynthesis; coproporphyrinogen-III from 5-aminolevulinate: step 2/4. Functionally, tetrapolymerization of the monopyrrole PBG into the hydroxymethylbilane pre-uroporphyrinogen in several discrete steps. This is Probable porphobilinogen deaminase from Saccharolobus islandicus (strain L.S.2.15 / Lassen #1) (Sulfolobus islandicus).